A 507-amino-acid chain; its full sequence is Cobyric acid synthase (507 aa).

Positions 273–468 (RPVIAVIAYP…LHGMFEDPAV (196 aa)) constitute a GATase cobBQ-type domain. Cys-354 acts as the Nucleophile in catalysis. His-460 is an active-site residue.

It belongs to the CobB/CobQ family. CobQ subfamily.

It participates in cofactor biosynthesis; adenosylcobalamin biosynthesis. Its function is as follows. Catalyzes amidations at positions B, D, E, and G on adenosylcobyrinic A,C-diamide. NH(2) groups are provided by glutamine, and one molecule of ATP is hydrogenolyzed for each amidation. The chain is Cobyric acid synthase from Polaromonas sp. (strain JS666 / ATCC BAA-500).